The sequence spans 517 residues: Crotonobetaine/carnitine--CoA ligase (517 aa).

It belongs to the ATP-dependent AMP-binding enzyme family.

The catalysed reaction is 4-(trimethylamino)butanoate + ATP + CoA = 4-(trimethylamino)butanoyl-CoA + AMP + diphosphate. It catalyses the reaction crotonobetaine + ATP + CoA = crotonobetainyl-CoA + AMP + diphosphate. It carries out the reaction (R)-carnitine + ATP + CoA = (R)-carnitinyl-CoA + AMP + diphosphate. The protein operates within amine and polyamine metabolism; carnitine metabolism. Functionally, catalyzes the transfer of CoA to carnitine, generating the initial carnitinyl-CoA needed for the CaiB reaction cycle. Also has activity toward crotonobetaine and gamma-butyrobetaine. This chain is Crotonobetaine/carnitine--CoA ligase, found in Salmonella choleraesuis (strain SC-B67).